The chain runs to 228 residues: Heptaprenylglyceryl phosphate synthase (228 aa).

Lysine 12 serves as a coordination point for sn-glycerol 1-phosphate. Aspartate 14 and serine 40 together coordinate Mg(2+). Sn-glycerol 1-phosphate is bound by residues 159-164, glycine 189, and 209-210; these read YLEYSG and GN.

This sequence belongs to the GGGP/HepGP synthase family. Group I subfamily. In terms of assembly, homodimer. Mg(2+) serves as cofactor.

The catalysed reaction is sn-glycerol 1-phosphate + all-trans-heptaprenyl diphosphate = 3-heptaprenyl-sn-glycero-1-phosphate + diphosphate. Its pathway is membrane lipid metabolism; glycerophospholipid metabolism. In terms of biological role, prenyltransferase that catalyzes in vivo the transfer of the heptaprenyl moiety of heptaprenyl pyrophosphate (HepPP; 35 carbon atoms) to the C3 hydroxyl of sn-glycerol-1-phosphate (G1P), producing heptaprenylglyceryl phosphate (HepGP). This reaction is an ether-bond-formation step in the biosynthesis of archaea-type G1P-based membrane lipids found in Bacillales. The sequence is that of Heptaprenylglyceryl phosphate synthase from Bacillus licheniformis (strain ATCC 14580 / DSM 13 / JCM 2505 / CCUG 7422 / NBRC 12200 / NCIMB 9375 / NCTC 10341 / NRRL NRS-1264 / Gibson 46).